The chain runs to 348 residues: UDP-N-acetylglucosamine--N-acetylmuramyl-(pentapeptide) pyrophosphoryl-undecaprenol N-acetylglucosamine transferase (348 aa).

Residues 11–13, asparagine 120, arginine 161, serine 187, and glutamine 281 each bind UDP-N-acetyl-alpha-D-glucosamine; that span reads TGG.

The protein belongs to the glycosyltransferase 28 family. MurG subfamily.

It localises to the cell inner membrane. It catalyses the reaction di-trans,octa-cis-undecaprenyl diphospho-N-acetyl-alpha-D-muramoyl-L-alanyl-D-glutamyl-meso-2,6-diaminopimeloyl-D-alanyl-D-alanine + UDP-N-acetyl-alpha-D-glucosamine = di-trans,octa-cis-undecaprenyl diphospho-[N-acetyl-alpha-D-glucosaminyl-(1-&gt;4)]-N-acetyl-alpha-D-muramoyl-L-alanyl-D-glutamyl-meso-2,6-diaminopimeloyl-D-alanyl-D-alanine + UDP + H(+). It participates in cell wall biogenesis; peptidoglycan biosynthesis. Functionally, cell wall formation. Catalyzes the transfer of a GlcNAc subunit on undecaprenyl-pyrophosphoryl-MurNAc-pentapeptide (lipid intermediate I) to form undecaprenyl-pyrophosphoryl-MurNAc-(pentapeptide)GlcNAc (lipid intermediate II). This chain is UDP-N-acetylglucosamine--N-acetylmuramyl-(pentapeptide) pyrophosphoryl-undecaprenol N-acetylglucosamine transferase, found in Crocosphaera subtropica (strain ATCC 51142 / BH68) (Cyanothece sp. (strain ATCC 51142)).